We begin with the raw amino-acid sequence, 345 residues long: Protein RecA (345 aa).

An ATP-binding site is contributed by 68-75 (GVESSGKT).

Belongs to the RecA family.

The protein resides in the cytoplasm. Its function is as follows. Can catalyze the hydrolysis of ATP in the presence of single-stranded DNA, the ATP-dependent uptake of single-stranded DNA by duplex DNA, and the ATP-dependent hybridization of homologous single-stranded DNAs. It interacts with LexA causing its activation and leading to its autocatalytic cleavage. This Aquifex aeolicus (strain VF5) protein is Protein RecA.